Consider the following 118-residue polypeptide: Putative pterin-4-alpha-carbinolamine dehydratase (118 aa).

Belongs to the pterin-4-alpha-carbinolamine dehydratase family.

The enzyme catalyses (4aS,6R)-4a-hydroxy-L-erythro-5,6,7,8-tetrahydrobiopterin = (6R)-L-erythro-6,7-dihydrobiopterin + H2O. The chain is Putative pterin-4-alpha-carbinolamine dehydratase from Pseudomonas putida (strain GB-1).